Reading from the N-terminus, the 368-residue chain is Anhydro-N-acetylmuramic acid kinase (368 aa).

ATP is bound at residue 13–20 (GTSLDGVD).

This sequence belongs to the anhydro-N-acetylmuramic acid kinase family.

The catalysed reaction is 1,6-anhydro-N-acetyl-beta-muramate + ATP + H2O = N-acetyl-D-muramate 6-phosphate + ADP + H(+). It functions in the pathway amino-sugar metabolism; 1,6-anhydro-N-acetylmuramate degradation. Its pathway is cell wall biogenesis; peptidoglycan recycling. Functionally, catalyzes the specific phosphorylation of 1,6-anhydro-N-acetylmuramic acid (anhMurNAc) with the simultaneous cleavage of the 1,6-anhydro ring, generating MurNAc-6-P. Is required for the utilization of anhMurNAc either imported from the medium or derived from its own cell wall murein, and thus plays a role in cell wall recycling. This is Anhydro-N-acetylmuramic acid kinase from Hahella chejuensis (strain KCTC 2396).